The sequence spans 268 residues: uncharacterized protein (268 aa).

This is an uncharacterized protein from Methanocaldococcus jannaschii (strain ATCC 43067 / DSM 2661 / JAL-1 / JCM 10045 / NBRC 100440) (Methanococcus jannaschii).